We begin with the raw amino-acid sequence, 1359 residues long: ABC transporter C family member 1 (1359 aa).

The ABC transmembrane type-1 1 domain maps to 111-394; it reads NKLTIFLQIL…LPNSIQQLQS (284 aa). The next 6 membrane-spanning stretches (helical) occupy residues 119–139, 147–167, 214–234, 244–264, 332–352, and 363–383; these read ILTNILSILSPLSLKYFIQFI, SFLAGIGYCILLLIASFSYTF, LLSVDVGIISNFFWIEHMGIF, LALLCWVIGWSGLVGFAIMVI, MIFWIFAEMMKQAVNAIVLVL, and ITLEVAFTTISIFVSLRIPLL. Residues 409-478 form a disordered region; the sequence is PEIQQNHSSN…QQQQQQQQQQ (70 aa). Acidic residues predominate over residues 420–433; sequence EEEEEDEYDDDINS. The segment covering 440–450 has biased composition (polar residues); it reads HNGSFNWNQVD. Residues 459–478 show a composition bias toward low complexity; that stretch reads GNQQQQQQQQQQQQQQQQQQ. The ABC transporter 1 domain occupies 470–690; the sequence is QQQQQQQQQQ…IDFESIMKTK (221 aa). 502-509 provides a ligand contact to ATP; it reads GVVGSGKT. The 299-residue stretch at 763-1061 folds into the ABC transmembrane type-1 2 domain; it reads LRVYKEYFKH…LEVKMNSVER (299 aa). The next 5 membrane-spanning stretches (helical) occupy residues 773-793, 819-839, 884-904, 906-926, and 999-1021; these read GSSIPLFIMTCIVYMISQIIY, IYLLFIVGFIIFLVIRYFMMA, VDLLLFDLFSDVLYCGSTVLV, IGIMIYISPLIIIPFLLLIGI, and WVAVRLEFISSIVVFLAAFFSLF. Positions 1073 to 1102 form a coiled coil; the sequence is NSKINFFRNEQQEEEEEEEEEFDFDNDDYD. The ABC transporter 2 domain maps to 1116–1350; that stretch reads IEFRNVEIKY…QESRFSKLVK (235 aa). 1150–1157 is an ATP binding site; the sequence is GRTGAGKS.

It belongs to the ABC transporter superfamily. ABCC family. Conjugate transporter (TC 3.A.1.208) subfamily.

Its subcellular location is the membrane. The chain is ABC transporter C family member 1 (abcC1) from Dictyostelium discoideum (Social amoeba).